Reading from the N-terminus, the 92-residue chain is C-C motif chemokine 4-like (92 aa).

The N-terminal stretch at 1–23 (MKLCVTVLSLLVLVAAFCSLALS) is a signal peptide. Disulfide bonds link cysteine 34/cysteine 58 and cysteine 35/cysteine 74.

It belongs to the intercrine beta (chemokine CC) family. As to quaternary structure, interacts with CCR5. In terms of tissue distribution, detected in B-cells.

The protein localises to the secreted. In terms of biological role, chemokine that induces chemotaxis of cells expressing CCR5 or CCR1. Inhibits HIV replication in peripheral blood monocytes that express CCR5. The polypeptide is C-C motif chemokine 4-like (CCL4L1) (Homo sapiens (Human)).